We begin with the raw amino-acid sequence, 377 residues long: Succinyl-diaminopimelate desuccinylase (377 aa).

Residue His66 coordinates Zn(2+). The active site involves Asp68. Residue Asp99 participates in Zn(2+) binding. Glu133 (proton acceptor) is an active-site residue. Residues Glu134, Glu162, and His348 each coordinate Zn(2+).

It belongs to the peptidase M20A family. DapE subfamily. In terms of assembly, homodimer. The cofactor is Zn(2+). Co(2+) serves as cofactor.

It carries out the reaction N-succinyl-(2S,6S)-2,6-diaminopimelate + H2O = (2S,6S)-2,6-diaminopimelate + succinate. Its pathway is amino-acid biosynthesis; L-lysine biosynthesis via DAP pathway; LL-2,6-diaminopimelate from (S)-tetrahydrodipicolinate (succinylase route): step 3/3. Catalyzes the hydrolysis of N-succinyl-L,L-diaminopimelic acid (SDAP), forming succinate and LL-2,6-diaminopimelate (DAP), an intermediate involved in the bacterial biosynthesis of lysine and meso-diaminopimelic acid, an essential component of bacterial cell walls. The chain is Succinyl-diaminopimelate desuccinylase from Histophilus somni (strain 2336) (Haemophilus somnus).